Reading from the N-terminus, the 385-residue chain is MSDIKQMIGKTFMEIADAIETGSFAGKVKVGITTLGSEHGVENLVKGAELAAKDAAGFDIVLIGPKVETSLEVVEVATEEEAHKKMEELLDSGYIHSCVTVHYNFPIGVSTVGRVVTPGMGKEMFIATTTGTSAAQRVEAMVRNALYGIITAKSMGIENPTVGILNLDGARAVERALKELAGNGYPITFAESLRADGGSVMRGNDLLGGAADVMVTDSLTGNIMMKVFSSYTTGGSYEGLGYGYGPGIGDGYNRTILILSRASGVPVAANAIKYAAKLAQNNVKAIAAAEFKAAKAAGLESILAGLSKDTKKASTEEEVKMPPKEVVTGTISGVDVMDLEDAQKVLWKAGIYAESGMGCTGPIVMVNEAKVEEAAKILKDAGIVA.

Cys359 is a catalytic residue.

Heterooctamer of four alpha and four beta subunits. Component of the glycine, sarcosine and betaine reductase complexes, together with proteins A and B.

The enzyme catalyses acetyl phosphate + [thioredoxin]-disulfide + NH4(+) + H2O = [thioredoxin]-dithiol + glycine + phosphate + H(+). It carries out the reaction acetyl phosphate + methylamine + [thioredoxin]-disulfide + H2O = sarcosine + [thioredoxin]-dithiol + phosphate + H(+). The catalysed reaction is acetyl phosphate + trimethylamine + [thioredoxin]-disulfide + H2O = glycine betaine + [thioredoxin]-dithiol + phosphate + H(+). Functionally, in the first step of glycine, betaine and sarcosine reductases, the substrate is bound to component PB via a Schiff base intermediate. Then the PB-activated substrate is nucleophilically attacked by the selenol anion of component PA to transform it to a carboxymethylated selenoether and the respective amine. By action of component PC, acetyl phosphate is formed, leaving component PA in its oxidized state. Finally component PA becomes reduced by the thioredoxin system to start a new catalytic cycle of reductive deamination. This is Glycine/sarcosine/betaine reductase complex component C subunit alpha (grdD) from Peptoclostridium acidaminophilum (Eubacterium acidaminophilum).